The chain runs to 310 residues: uncharacterized protein (310 aa).

Residues 1-70 (MAGNSQRRGA…ARGRTDETET (70 aa)) are disordered. The span at 49 to 62 (AAKRAKAQQRRPAR) shows a compositional bias: basic residues. Residues G262, V282, and L291 each coordinate S-adenosyl-L-methionine.

Belongs to the class IV-like SAM-binding methyltransferase superfamily. RNA methyltransferase TrmH family.

This is an uncharacterized protein from Mycobacterium marinum (strain ATCC BAA-535 / M).